We begin with the raw amino-acid sequence, 3658 residues long: E3 ubiquitin-protein ligase UPL2 (3658 aa).

The segment covering 884 to 893 (DEKKSVDRAS) has biased composition (basic and acidic residues). Residues 884-914 (DEKKSVDRASDNSVSASSSTAERESDEDSSN) are disordered. A compositionally biased stretch (low complexity) spans 894 to 903 (DNSVSASSST). Residues 1271-1312 (QPDEAIVGMIVEMGFSRSRAEDALRRVGTNSVEMAMDWLFTN) form the UBA domain. A UIM domain is found at 1318-1337 (QEDDELAQALALSLGNSSET). Disordered stretches follow at residues 1331 to 1360 (LGNS…KEPP), 1702 to 1733 (VSGS…SKSH), 2004 to 2038 (AEQL…VDEL), 2052 to 2072 (VDNG…RGSS), 2113 to 2204 (HVED…DDMV), 2293 to 2313 (PLFS…SAGS), 2417 to 2487 (ERET…EGGG), 2503 to 2591 (SAQG…PEVN), and 2958 to 2987 (SPSS…AESE). Positions 1338–1347 (PKLEDTEKPV) are enriched in basic and acidic residues. Residues 2007 to 2027 (LKSEVPNEQKNTDSDERHDSH) are compositionally biased toward basic and acidic residues. Polar residues predominate over residues 2028 to 2038 (GTSTSTEVDEL). 2 stretches are compositionally biased toward acidic residues: residues 2117–2144 (RADD…DSVE) and 2156–2204 (DVED…DDMV). The span at 2297–2313 (RPSQTGNTASVSASAGS) shows a compositional bias: polar residues. Low complexity predominate over residues 2422–2431 (TTEVQEQQQP). Polar residues predominate over residues 2503–2518 (SAQGQSDTSGIQNVSV). S2582 bears the Phosphoserine mark. The HECT domain occupies 3317–3658 (SPQDLKGRLN…HEANEGFGFA (342 aa)). Residue C3625 is the Glycyl thioester intermediate of the active site.

It belongs to the UPL family. TOM1/PTR1 subfamily. In terms of tissue distribution, widely expressed. Expressed in root, stem, cauline and rosette leaf, seedling and flower (at protein level).

It catalyses the reaction S-ubiquitinyl-[E2 ubiquitin-conjugating enzyme]-L-cysteine + [acceptor protein]-L-lysine = [E2 ubiquitin-conjugating enzyme]-L-cysteine + N(6)-ubiquitinyl-[acceptor protein]-L-lysine.. It functions in the pathway protein modification; protein ubiquitination. In terms of biological role, probable E3 ubiquitin-protein ligase which mediates ubiquitination and subsequent proteasomal degradation of target proteins. This Arabidopsis thaliana (Mouse-ear cress) protein is E3 ubiquitin-protein ligase UPL2 (UPL2).